Reading from the N-terminus, the 379-residue chain is Cytochrome b (379 aa).

4 helical membrane-spanning segments follow: residues 32–52, 76–98, 111–131, and 177–197; these read YGSL…VLAT, WLLR…LHIG, VWNI…LGYV, and FFAL…LHIF. Heme b-binding residues include histidine 82 and histidine 96. The heme b site is built by histidine 181 and histidine 195. Histidine 200 contacts a ubiquinone. 4 consecutive transmembrane segments (helical) span residues 223–243, 287–304, 320–340, and 348–367; these read YSVK…VFTL, LGGV…FLFS, LARL…WLGS, and NEVA…TMCA.

The protein belongs to the cytochrome b family. In terms of assembly, the main subunits of complex b-c1 are: cytochrome b, cytochrome c1 and the Rieske protein. The cofactor is heme b.

It localises to the mitochondrion inner membrane. Its function is as follows. Component of the ubiquinol-cytochrome c reductase complex (complex III or cytochrome b-c1 complex) that is part of the mitochondrial respiratory chain. The b-c1 complex mediates electron transfer from ubiquinol to cytochrome c. Contributes to the generation of a proton gradient across the mitochondrial membrane that is then used for ATP synthesis. In Brachionus plicatilis (Marine rotifer), this protein is Cytochrome b (mt:Cyt-b).